Consider the following 470-residue polypeptide: Cysteine--tRNA ligase (470 aa).

C28 contacts Zn(2+). The 'HIGH' region signature appears at 30-40 (PTVYNYIHIGN). Zn(2+) contacts are provided by C212, H237, and E241. Positions 271–275 (KMSKS) match the 'KMSKS' region motif. K274 is a binding site for ATP.

It belongs to the class-I aminoacyl-tRNA synthetase family. As to quaternary structure, monomer. Zn(2+) serves as cofactor.

The protein resides in the cytoplasm. It catalyses the reaction tRNA(Cys) + L-cysteine + ATP = L-cysteinyl-tRNA(Cys) + AMP + diphosphate. In Lactiplantibacillus plantarum (strain ATCC BAA-793 / NCIMB 8826 / WCFS1) (Lactobacillus plantarum), this protein is Cysteine--tRNA ligase.